The following is a 194-amino-acid chain: FMN-dependent NADH:quinone oxidoreductase (194 aa).

Residues Ser-10 and Met-90–Leu-93 each bind FMN.

This sequence belongs to the azoreductase type 1 family. Homodimer. FMN is required as a cofactor.

The catalysed reaction is 2 a quinone + NADH + H(+) = 2 a 1,4-benzosemiquinone + NAD(+). It carries out the reaction N,N-dimethyl-1,4-phenylenediamine + anthranilate + 2 NAD(+) = 2-(4-dimethylaminophenyl)diazenylbenzoate + 2 NADH + 2 H(+). Quinone reductase that provides resistance to thiol-specific stress caused by electrophilic quinones. Functionally, also exhibits azoreductase activity. Catalyzes the reductive cleavage of the azo bond in aromatic azo compounds to the corresponding amines. The chain is FMN-dependent NADH:quinone oxidoreductase from Haemophilus influenzae (strain PittEE).